Here is a 245-residue protein sequence, read N- to C-terminus: MNKNIKYSQNFLTSEKVLNQIIKQLNLKETDTVYEIGTGKGHLTTKLAKISKQVTSIELDSHLFNLSSEKLKLNIRVTLIHQDILQFQFPNKQRYKIVGSIPYHLSTQIIKKVVFESHASDIYLIVEEGFYKRTLDIHRTLGLLLHTQVSIQQLLKLPAECFHPKPKVNSVLIKLTRHTTDVPDKYWKLYTYFVSKWVNREYRQLFTKNQFHQAMKHAKVNNLSTITYEQVLSIFNSYLLFNGRK.

Residues Asn-10, Leu-12, Gly-37, Glu-58, Asp-83, and Ser-100 each coordinate S-adenosyl-L-methionine.

This sequence belongs to the class I-like SAM-binding methyltransferase superfamily. rRNA adenine N(6)-methyltransferase family.

It catalyses the reaction adenosine(2085) in 23S rRNA + 2 S-adenosyl-L-methionine = N(6)-dimethyladenosine(2085) in 23S rRNA + 2 S-adenosyl-L-homocysteine + 2 H(+). This protein produces a dimethylation of the adenine residue at position 2085 in 23S rRNA, resulting in reduced affinity between ribosomes and macrolide-lincosamide-streptogramin B antibiotics. This chain is rRNA adenine N-6-methyltransferase (erm), found in Streptococcus pneumoniae.